A 242-amino-acid polypeptide reads, in one-letter code: Probable transcriptional regulatory protein Cphy_2507 (242 aa).

Belongs to the TACO1 family.

Its subcellular location is the cytoplasm. The chain is Probable transcriptional regulatory protein Cphy_2507 from Lachnoclostridium phytofermentans (strain ATCC 700394 / DSM 18823 / ISDg) (Clostridium phytofermentans).